The primary structure comprises 233 residues: MPTSKKLKDALAKVDRSKSYTLNDGLELVRSSAYAKFTETVDVAVRLGVDPRHADQMVRGAVVLPNGLGKEVRVLVFAKGEKEKEARDAGADFVGADDLVAKIQEGWFEFDTAIATPDMMGVVGKIGKLLGPRGLMPNPKVGTVTFDVGRAVNESKSGKVEFRVEKAGIIHAPVGKVSFETDKLKENILALIDALVKSKPSAAKGTYIKKISVSSTMGPGVNLDVSDVSSQVI.

Belongs to the universal ribosomal protein uL1 family. In terms of assembly, part of the 50S ribosomal subunit.

Its function is as follows. Binds directly to 23S rRNA. The L1 stalk is quite mobile in the ribosome, and is involved in E site tRNA release. Protein L1 is also a translational repressor protein, it controls the translation of the L11 operon by binding to its mRNA. This is Large ribosomal subunit protein uL1 from Geotalea daltonii (strain DSM 22248 / JCM 15807 / FRC-32) (Geobacter daltonii).